The sequence spans 158 residues: MKLNEIKDNEGSTHSRKRLGRGIGSGSGKTGGRGVKGQKSRSGVAINGFEGGQMPIYRRLPKRGFNNIFASDFVVVSLARIQAAIDAGKLDAKATVDAAALKAAGVIRRTKDGVRVLADGELKAKITIVVAGASKPAVEKIEKAGGTVTLLSAPAAAE.

Residues 1-13 are compositionally biased toward basic and acidic residues; sequence MKLNEIKDNEGST. Positions 1-45 are disordered; the sequence is MKLNEIKDNEGSTHSRKRLGRGIGSGSGKTGGRGVKGQKSRSGVA. The span at 21-35 shows a compositional bias: gly residues; that stretch reads RGIGSGSGKTGGRGV.

The protein belongs to the universal ribosomal protein uL15 family. As to quaternary structure, part of the 50S ribosomal subunit.

Its function is as follows. Binds to the 23S rRNA. In Rhizobium leguminosarum bv. trifolii (strain WSM2304), this protein is Large ribosomal subunit protein uL15.